Reading from the N-terminus, the 250-residue chain is 4-hydroxy-tetrahydrodipicolinate reductase (250 aa).

NAD(+)-binding positions include 9–14 (GATGKM), 79–81 (GTT), and 103–106 (SANM). Catalysis depends on His-135, which acts as the Proton donor/acceptor. Position 136 (His-136) interacts with (S)-2,3,4,5-tetrahydrodipicolinate. The active-site Proton donor is the Lys-139. A (S)-2,3,4,5-tetrahydrodipicolinate-binding site is contributed by 145–146 (GT).

It belongs to the DapB family.

Its subcellular location is the cytoplasm. It catalyses the reaction (S)-2,3,4,5-tetrahydrodipicolinate + NAD(+) + H2O = (2S,4S)-4-hydroxy-2,3,4,5-tetrahydrodipicolinate + NADH + H(+). It carries out the reaction (S)-2,3,4,5-tetrahydrodipicolinate + NADP(+) + H2O = (2S,4S)-4-hydroxy-2,3,4,5-tetrahydrodipicolinate + NADPH + H(+). It functions in the pathway amino-acid biosynthesis; L-lysine biosynthesis via DAP pathway; (S)-tetrahydrodipicolinate from L-aspartate: step 4/4. Functionally, catalyzes the conversion of 4-hydroxy-tetrahydrodipicolinate (HTPA) to tetrahydrodipicolinate. In Rickettsia bellii (strain OSU 85-389), this protein is 4-hydroxy-tetrahydrodipicolinate reductase.